We begin with the raw amino-acid sequence, 322 residues long: Glutamyl-Q tRNA(Asp) synthetase (322 aa).

L-glutamate is bound by residues 28–32 (RFAPS) and Glu-64. A 'HIGH' region motif is present at residues 31–41 (PSPSGDLHFGS). Zn(2+) is bound by residues Cys-120, Cys-122, Tyr-134, and Cys-138. Positions 191 and 209 each coordinate L-glutamate. The 'KMSKS' region motif lies at 247-251 (KLSKQ). Lys-250 lines the ATP pocket.

Belongs to the class-I aminoacyl-tRNA synthetase family. GluQ subfamily. Requires Zn(2+) as cofactor.

Its function is as follows. Catalyzes the tRNA-independent activation of glutamate in presence of ATP and the subsequent transfer of glutamate onto a tRNA(Asp). Glutamate is transferred on the 2-amino-5-(4,5-dihydroxy-2-cyclopenten-1-yl) moiety of the queuosine in the wobble position of the QUC anticodon. The polypeptide is Glutamyl-Q tRNA(Asp) synthetase (Pectobacterium atrosepticum (strain SCRI 1043 / ATCC BAA-672) (Erwinia carotovora subsp. atroseptica)).